Consider the following 510-residue polypeptide: UDP-N-acetylmuramoyl-tripeptide--D-alanyl-D-alanine ligase (510 aa).

Residue 136-142 (GSSGKTS) participates in ATP binding.

It belongs to the MurCDEF family. MurF subfamily.

The protein localises to the cytoplasm. It catalyses the reaction D-alanyl-D-alanine + UDP-N-acetyl-alpha-D-muramoyl-L-alanyl-gamma-D-glutamyl-meso-2,6-diaminopimelate + ATP = UDP-N-acetyl-alpha-D-muramoyl-L-alanyl-gamma-D-glutamyl-meso-2,6-diaminopimeloyl-D-alanyl-D-alanine + ADP + phosphate + H(+). It functions in the pathway cell wall biogenesis; peptidoglycan biosynthesis. Involved in cell wall formation. Catalyzes the final step in the synthesis of UDP-N-acetylmuramoyl-pentapeptide, the precursor of murein. This Mycobacterium bovis (strain ATCC BAA-935 / AF2122/97) protein is UDP-N-acetylmuramoyl-tripeptide--D-alanyl-D-alanine ligase.